The following is a 633-amino-acid chain: Molybdenum cofactor biosynthesis protein 1 (633 aa).

A molybdenum cofactor biosynthesis protein A region spans residues Met-1–Ile-380. Phosphoserine is present on Ser-61. The Radical SAM core domain occupies Ser-61–Arg-295. Arg-70 contacts GTP. [4Fe-4S] cluster contacts are provided by Cys-77 and Cys-81. Position 83 (Tyr-83) interacts with S-adenosyl-L-methionine. Cys-84 provides a ligand contact to [4Fe-4S] cluster. GTP is bound at residue Arg-120. Residue Gly-124 coordinates S-adenosyl-L-methionine. Thr-151 contributes to the GTP binding site. Ser-175 serves as a coordination point for S-adenosyl-L-methionine. Position 195 is an N6-acetyllysine (Lys-195). Lys-212 contacts GTP. An S-adenosyl-L-methionine-binding site is contributed by Met-246. 2 residues coordinate [4Fe-4S] cluster: Cys-309 and Cys-312. Arg-314–Arg-316 lines the GTP pocket. [4Fe-4S] cluster is bound at residue Cys-326. Positions Val-410–Thr-633 are molybdenum cofactor biosynthesis protein C. Residues Ser-446–Thr-480 are disordered. Lys-525 bears the N6-acetyllysine mark. Catalysis depends on Asp-603, which acts as the For molybdenum cofactor biosynthesis protein C activity.

This sequence in the C-terminal section; belongs to the MoaC family. It in the N-terminal section; belongs to the radical SAM superfamily. MoaA family. Isoform MOCS1A and isoform MOCS1B probably form a heterooligomer. The cofactor is [4Fe-4S] cluster.

It catalyses the reaction GTP + AH2 + S-adenosyl-L-methionine = (8S)-3',8-cyclo-7,8-dihydroguanosine 5'-triphosphate + 5'-deoxyadenosine + L-methionine + A + H(+). It carries out the reaction (8S)-3',8-cyclo-7,8-dihydroguanosine 5'-triphosphate = cyclic pyranopterin phosphate + diphosphate. The protein operates within cofactor biosynthesis; molybdopterin biosynthesis. In terms of biological role, isoform MOCS1A and isoform MOCS1B probably form a complex that catalyzes the conversion of 5'-GTP to cyclic pyranopterin monophosphate (cPMP). MOCS1A catalyzes the cyclization of GTP to (8S)-3',8-cyclo-7,8-dihydroguanosine 5'-triphosphate and MOCS1B catalyzes the subsequent conversion of (8S)-3',8-cyclo-7,8-dihydroguanosine 5'-triphosphate to cPMP. This Bos taurus (Bovine) protein is Molybdenum cofactor biosynthesis protein 1 (MOCS1).